Here is a 487-residue protein sequence, read N- to C-terminus: Glycogen synthase (487 aa).

Lysine 20 is a binding site for ADP-alpha-D-glucose.

Belongs to the glycosyltransferase 1 family. Bacterial/plant glycogen synthase subfamily.

The enzyme catalyses [(1-&gt;4)-alpha-D-glucosyl](n) + ADP-alpha-D-glucose = [(1-&gt;4)-alpha-D-glucosyl](n+1) + ADP + H(+). It functions in the pathway glycan biosynthesis; glycogen biosynthesis. In terms of biological role, synthesizes alpha-1,4-glucan chains using ADP-glucose. The sequence is that of Glycogen synthase from Aliivibrio fischeri (strain MJ11) (Vibrio fischeri).